The following is a 95-amino-acid chain: Nucleoid-associated protein MARTH_orf159 (95 aa).

It belongs to the YbaB/EbfC family. In terms of assembly, homodimer.

The protein localises to the cytoplasm. Its subcellular location is the nucleoid. In terms of biological role, binds to DNA and alters its conformation. May be involved in regulation of gene expression, nucleoid organization and DNA protection. This is Nucleoid-associated protein MARTH_orf159 from Metamycoplasma arthritidis (strain 158L3-1) (Mycoplasma arthritidis).